A 483-amino-acid chain; its full sequence is Trigger factor (483 aa).

A PPIase FKBP-type domain is found at 162 to 243 (GDYVSLDLSA…VRGVKEKELP (82 aa)). A disordered region spans residues 459-483 (AVAPGDGDATVEPVEPVEAETDGNG). Residues 473 to 483 (EPVEAETDGNG) show a composition bias toward acidic residues.

This sequence belongs to the FKBP-type PPIase family. Tig subfamily.

It localises to the cytoplasm. The catalysed reaction is [protein]-peptidylproline (omega=180) = [protein]-peptidylproline (omega=0). Its function is as follows. Involved in protein export. Acts as a chaperone by maintaining the newly synthesized protein in an open conformation. Functions as a peptidyl-prolyl cis-trans isomerase. The polypeptide is Trigger factor (Frankia casuarinae (strain DSM 45818 / CECT 9043 / HFP020203 / CcI3)).